Reading from the N-terminus, the 40-residue chain is Spodomicin (40 aa).

Cystine bridges form between cysteine 6/cysteine 20, cysteine 10/cysteine 32, and cysteine 21/cysteine 39.

In terms of assembly, monomer. Post-translationally, contains three disulfide bonds. As to expression, hemolymph.

It is found in the secreted. Functionally, fungicide. This Spodoptera littoralis (Egyptian cotton leafworm) protein is Spodomicin.